The sequence spans 658 residues: Glycogen debranching enzyme (658 aa).

Catalysis depends on Asp-336, which acts as the Nucleophile. The active-site Proton donor is Glu-371.

Belongs to the glycosyl hydrolase 13 family.

The catalysed reaction is Hydrolysis of (1-&gt;6)-alpha-D-glucosidic linkages to branches with degrees of polymerization of three or four glucose residues in limit dextrin.. Its pathway is glycan degradation; glycogen degradation. Removes maltotriose and maltotetraose chains that are attached by 1,6-alpha-linkage to the limit dextrin main chain, generating a debranched limit dextrin. The sequence is that of Glycogen debranching enzyme from Klebsiella pneumoniae subsp. pneumoniae (strain ATCC 700721 / MGH 78578).